The primary structure comprises 163 residues: Large ribosomal subunit protein uL15 (163 aa).

The protein belongs to the universal ribosomal protein uL15 family. Part of the 50S ribosomal subunit.

In terms of biological role, binds to the 23S rRNA. The chain is Large ribosomal subunit protein uL15 from Orientia tsutsugamushi (strain Ikeda) (Rickettsia tsutsugamushi).